The following is a 523-amino-acid chain: GMP synthase [glutamine-hydrolyzing] (523 aa).

The Glutamine amidotransferase type-1 domain maps to 9–198 (PVLVVDFGAQ…LTEIAGLEQN (190 aa)). Cysteine 86 functions as the Nucleophile in the catalytic mechanism. Residues histidine 172 and glutamate 174 contribute to the active site. The GMPS ATP-PPase domain occupies 199-397 (WTAANIAEEL…LGLPEEIVGR (199 aa)). Position 227–233 (227–233 (SGGVDSA)) interacts with ATP.

As to quaternary structure, homodimer.

The enzyme catalyses XMP + L-glutamine + ATP + H2O = GMP + L-glutamate + AMP + diphosphate + 2 H(+). Its pathway is purine metabolism; GMP biosynthesis; GMP from XMP (L-Gln route): step 1/1. Functionally, catalyzes the synthesis of GMP from XMP. The chain is GMP synthase [glutamine-hydrolyzing] from Corynebacterium glutamicum (strain R).